The sequence spans 200 residues: ADP-ribosylation factor-like protein 4A (200 aa).

Gly-2 carries the N-myristoyl glycine lipid modification. GTP is bound by residues 27-34 (GLDCAGKT), 75-79 (DVGGQ), and 134-137 (NKQD).

The protein belongs to the small GTPase superfamily. Arf family. Interacts with CYTH2. Interacts with KPNA2; the interaction is direct. Does not interact with ARL4A. Post-translationally, myristoylated. In terms of tissue distribution, expressed strongly in testis and liver. Expressed slightly in heart, spleen, lung and kidney.

The protein localises to the cell membrane. Its subcellular location is the cytoplasm. It localises to the nucleus. It is found in the nucleolus. In terms of biological role, small GTP-binding protein which cycles between an inactive GDP-bound and an active GTP-bound form, and the rate of cycling is regulated by guanine nucleotide exchange factors (GEF) and GTPase-activating proteins (GAP). GTP-binding protein that does not act as an allosteric activator of the cholera toxin catalytic subunit. Recruits CYTH1, CYTH2, CYTH3 and CYTH4 to the plasma membrane in GDP-bound form. This chain is ADP-ribosylation factor-like protein 4A (Arl4a), found in Mus musculus (Mouse).